A 23-amino-acid polypeptide reads, in one-letter code: Coenzyme PQQ synthesis protein A (23 aa).

The segment at residues 15 to 19 is a cross-link (pyrroloquinoline quinone (Glu-Tyr)); the sequence is EVTLY.

This sequence belongs to the PqqA family.

It functions in the pathway cofactor biosynthesis; pyrroloquinoline quinone biosynthesis. Functionally, required for coenzyme pyrroloquinoline quinone (PQQ) biosynthesis. PQQ is probably formed by cross-linking a specific glutamate to a specific tyrosine residue and excising these residues from the peptide. The sequence is that of Coenzyme PQQ synthesis protein A from Pseudomonas aeruginosa (strain UCBPP-PA14).